Here is a 553-residue protein sequence, read N- to C-terminus: Arginine--tRNA ligase (553 aa).

A 'HIGH' region motif is present at residues 130-140; sequence ANPTGDLHIGH.

Belongs to the class-I aminoacyl-tRNA synthetase family. In terms of assembly, monomer.

The protein localises to the cytoplasm. The catalysed reaction is tRNA(Arg) + L-arginine + ATP = L-arginyl-tRNA(Arg) + AMP + diphosphate. The chain is Arginine--tRNA ligase from Staphylococcus aureus (strain bovine RF122 / ET3-1).